The sequence spans 401 residues: Exodeoxyribonuclease 7 large subunit (401 aa).

This sequence belongs to the XseA family. As to quaternary structure, heterooligomer composed of large and small subunits.

The protein resides in the cytoplasm. It carries out the reaction Exonucleolytic cleavage in either 5'- to 3'- or 3'- to 5'-direction to yield nucleoside 5'-phosphates.. Bidirectionally degrades single-stranded DNA into large acid-insoluble oligonucleotides, which are then degraded further into small acid-soluble oligonucleotides. The sequence is that of Exodeoxyribonuclease 7 large subunit from Clostridioides difficile (strain 630) (Peptoclostridium difficile).